Reading from the N-terminus, the 270-residue chain is Regulatory protein RecX (270 aa).

This sequence belongs to the RecX family.

It localises to the cytoplasm. Modulates RecA activity. This is Regulatory protein RecX from Bacillus cereus (strain G9842).